The following is a 195-amino-acid chain: MRKILHIRSSIKEENSVSRKIGDDLISHFKSTDKVKVSERDLVDNSVEHINPDFINAMANNNQDRLATSNKLIEELFENDIIAIESPMYNFSIPSTLKSWIDNIMIARKTFLYTANGPEGLVKNKKAILVLSKGNIYSEGAAKPLDFQENYLKTILNFIGINDITVICAEGVDLNAEIREKSLKQVEQQIKNLSI.

FMN-binding positions include Ser10, 16 to 18 (SVS), and 88 to 91 (MYNF).

This sequence belongs to the azoreductase type 1 family. As to quaternary structure, homodimer. FMN serves as cofactor.

The catalysed reaction is 2 a quinone + NADH + H(+) = 2 a 1,4-benzosemiquinone + NAD(+). It catalyses the reaction N,N-dimethyl-1,4-phenylenediamine + anthranilate + 2 NAD(+) = 2-(4-dimethylaminophenyl)diazenylbenzoate + 2 NADH + 2 H(+). In terms of biological role, quinone reductase that provides resistance to thiol-specific stress caused by electrophilic quinones. Its function is as follows. Also exhibits azoreductase activity. Catalyzes the reductive cleavage of the azo bond in aromatic azo compounds to the corresponding amines. The protein is FMN-dependent NADH:quinone oxidoreductase of Francisella philomiragia subsp. philomiragia (strain ATCC 25017 / CCUG 19701 / FSC 153 / O#319-036).